The chain runs to 269 residues: Type II restriction enzyme SfiI (269 aa).

The catalysed reaction is Endonucleolytic cleavage of DNA to give specific double-stranded fragments with terminal 5'-phosphates.. Functionally, an F and P subtype restriction enzyme that recognizes the double-stranded sequence 5'-GGCCN(5)GGCC-3' and cleaves before N-9. This Streptomyces fimbriatus protein is Type II restriction enzyme SfiI (sfiIR).